A 542-amino-acid chain; its full sequence is 3-(3-hydroxy-phenyl)propionate/3-hydroxycinnamic acid hydroxylase (542 aa).

FAD is bound by residues Ser10–Arg39 and Phe278–Asp288.

This sequence belongs to the PheA/TfdB FAD monooxygenase family. Requires FAD as cofactor.

The catalysed reaction is 3-(3-hydroxyphenyl)propanoate + NADH + O2 + H(+) = 3-(2,3-dihydroxyphenyl)propanoate + NAD(+) + H2O. The enzyme catalyses (2E)-3-(3-hydroxyphenyl)prop-2-enoate + NADH + O2 + H(+) = (2E)-3-(2,3-dihydroxyphenyl)prop-2-enoate + NAD(+) + H2O. It participates in aromatic compound metabolism; 3-phenylpropanoate degradation. Its function is as follows. Catalyzes the insertion of one atom of molecular oxygen into position 2 of the phenyl ring of 3-(3-hydroxyphenyl)propionate (3-HPP) and hydroxycinnamic acid (3HCI). This Burkholderia cenocepacia (strain HI2424) protein is 3-(3-hydroxy-phenyl)propionate/3-hydroxycinnamic acid hydroxylase.